The primary structure comprises 370 residues: Anhydro-N-acetylmuramic acid kinase (370 aa).

An ATP-binding site is contributed by 12–19; the sequence is GTSLDGVD.

This sequence belongs to the anhydro-N-acetylmuramic acid kinase family.

It catalyses the reaction 1,6-anhydro-N-acetyl-beta-muramate + ATP + H2O = N-acetyl-D-muramate 6-phosphate + ADP + H(+). It participates in amino-sugar metabolism; 1,6-anhydro-N-acetylmuramate degradation. The protein operates within cell wall biogenesis; peptidoglycan recycling. Catalyzes the specific phosphorylation of 1,6-anhydro-N-acetylmuramic acid (anhMurNAc) with the simultaneous cleavage of the 1,6-anhydro ring, generating MurNAc-6-P. Is required for the utilization of anhMurNAc either imported from the medium or derived from its own cell wall murein, and thus plays a role in cell wall recycling. In Pectobacterium atrosepticum (strain SCRI 1043 / ATCC BAA-672) (Erwinia carotovora subsp. atroseptica), this protein is Anhydro-N-acetylmuramic acid kinase.